The chain runs to 379 residues: 4-hydroxy-3-methylbut-2-enyl diphosphate reductase (379 aa).

[4Fe-4S] cluster is bound at residue Cys39. His69 provides a ligand contact to (2E)-4-hydroxy-3-methylbut-2-enyl diphosphate. His69 lines the dimethylallyl diphosphate pocket. His69 is an isopentenyl diphosphate binding site. A [4Fe-4S] cluster-binding site is contributed by Cys130. A (2E)-4-hydroxy-3-methylbut-2-enyl diphosphate-binding site is contributed by His158. His158 is a binding site for dimethylallyl diphosphate. Residue His158 participates in isopentenyl diphosphate binding. Glu160 acts as the Proton donor in catalysis. Thr223 provides a ligand contact to (2E)-4-hydroxy-3-methylbut-2-enyl diphosphate. Cys261 contacts [4Fe-4S] cluster. Residues Ser290, Ser291, Asn292, and Ser352 each contribute to the (2E)-4-hydroxy-3-methylbut-2-enyl diphosphate site. Dimethylallyl diphosphate is bound by residues Ser290, Ser291, Asn292, and Ser352. The isopentenyl diphosphate site is built by Ser290, Ser291, Asn292, and Ser352.

This sequence belongs to the IspH family. It depends on [4Fe-4S] cluster as a cofactor.

It catalyses the reaction isopentenyl diphosphate + 2 oxidized [2Fe-2S]-[ferredoxin] + H2O = (2E)-4-hydroxy-3-methylbut-2-enyl diphosphate + 2 reduced [2Fe-2S]-[ferredoxin] + 2 H(+). The enzyme catalyses dimethylallyl diphosphate + 2 oxidized [2Fe-2S]-[ferredoxin] + H2O = (2E)-4-hydroxy-3-methylbut-2-enyl diphosphate + 2 reduced [2Fe-2S]-[ferredoxin] + 2 H(+). It participates in isoprenoid biosynthesis; dimethylallyl diphosphate biosynthesis; dimethylallyl diphosphate from (2E)-4-hydroxy-3-methylbutenyl diphosphate: step 1/1. Its pathway is isoprenoid biosynthesis; isopentenyl diphosphate biosynthesis via DXP pathway; isopentenyl diphosphate from 1-deoxy-D-xylulose 5-phosphate: step 6/6. In terms of biological role, catalyzes the conversion of 1-hydroxy-2-methyl-2-(E)-butenyl 4-diphosphate (HMBPP) into a mixture of isopentenyl diphosphate (IPP) and dimethylallyl diphosphate (DMAPP). Acts in the terminal step of the DOXP/MEP pathway for isoprenoid precursor biosynthesis. The polypeptide is 4-hydroxy-3-methylbut-2-enyl diphosphate reductase (Synechocystis sp. (strain ATCC 27184 / PCC 6803 / Kazusa)).